The chain runs to 648 residues: Nucleoside triphosphatase I (648 aa).

The Helicase ATP-binding domain occupies 48 to 213; the sequence is FIGLKNLNSM…NNLIGLLRPN (166 aa). An ATP-binding site is contributed by 61–68; that stretch reads WDTGTGKT. Positions 151–154 match the DEXH box motif; that stretch reads DEVH. In terms of domain architecture, Helicase C-terminal spans 379-542; the sequence is YIEACRIILN…KINVVFDLLK (164 aa). The segment at 468-534 is binding to the cap-specific mRNA (nucleoside-2'-O-)-methyltransferase; it reads DIIILDMPWN…DIIKNKQGKI (67 aa).

This sequence belongs to the helicase family. NPH I subfamily. As to quaternary structure, monomer. Interacts (via C-terminus) with RAP94 (via N-terminus). Interacts with the cap-specific mRNA (nucleoside-2'-O-)-methyltransferase.

It localises to the virion. It carries out the reaction a ribonucleoside 5'-triphosphate + H2O = a ribonucleoside 5'-diphosphate + phosphate + H(+). In terms of biological role, DNA-dependent ATPase required for providing the needed energy to achieve the termination of early transcripts. Acts in concert with the RAP94 subunit of the virion RNA polymerase and the capping enzyme/VTF to catalyze release of UUUUUNU-containing nascent RNA from the elongation complex. NPH-I must bind ssDNA in order to exhibit ATPase activity. The polypeptide is Nucleoside triphosphatase I (NPH1) (Choristoneura fumiferana (Spruce budworm moth)).